The primary structure comprises 173 residues: Ribosome maturation factor RimM (173 aa).

In terms of domain architecture, PRC barrel spans 94-168 (SNESYLCDLL…LIRINPPKGL (75 aa)).

The protein belongs to the RimM family. Binds ribosomal protein uS19.

Its subcellular location is the cytoplasm. Functionally, an accessory protein needed during the final step in the assembly of 30S ribosomal subunit, possibly for assembly of the head region. Essential for efficient processing of 16S rRNA. May be needed both before and after RbfA during the maturation of 16S rRNA. It has affinity for free ribosomal 30S subunits but not for 70S ribosomes. The protein is Ribosome maturation factor RimM of Lawsonia intracellularis (strain PHE/MN1-00).